Reading from the N-terminus, the 245-residue chain is Nicotinamide/nicotinic acid mononucleotide adenylyltransferase 3 (245 aa).

S14 and F15 together coordinate NAD(+). The ATP site is built by H22 and K56. NAD(+)-binding residues include W90, T93, G134, and D136. An ATP-binding site is contributed by K139. Residues L146, W147, R166, and N197 each contribute to the NAD(+) site. Position 202–205 (202–205 (TYVR)) interacts with ATP.

The protein belongs to the eukaryotic NMN adenylyltransferase family. In terms of assembly, homotetramer. The cofactor is Mg(2+).

It is found in the mitochondrion. The enzyme catalyses beta-nicotinamide D-ribonucleotide + ATP + H(+) = diphosphate + NAD(+). The catalysed reaction is nicotinate beta-D-ribonucleotide + ATP + H(+) = deamido-NAD(+) + diphosphate. Its pathway is cofactor biosynthesis; NAD(+) biosynthesis; NAD(+) from nicotinamide D-ribonucleotide: step 1/1. It functions in the pathway cofactor biosynthesis; NAD(+) biosynthesis; deamido-NAD(+) from nicotinate D-ribonucleotide: step 1/1. With respect to regulation, activity is strongly inhibited by galotannin. Inhibited by P1-(adenosine-5')-P4-(nicotinic-acid-riboside-5')-tetraphosphate (Nap4AD). Functionally, catalyzes the formation of NAD(+) from nicotinamide mononucleotide (NMN) and ATP. Can also use the deamidated form; nicotinic acid mononucleotide (NaMN) as substrate with the same efficiency. Can use triazofurin monophosphate (TrMP) as substrate. Can also use GTP and ITP as nucleotide donors. Also catalyzes the reverse reaction, i.e. the pyrophosphorolytic cleavage of NAD(+). For the pyrophosphorolytic activity, can use NAD(+), NADH, NaAD, nicotinic acid adenine dinucleotide phosphate (NHD), nicotinamide guanine dinucleotide (NGD) as substrates. Fails to cleave phosphorylated dinucleotides NADP(+), NADPH and NaADP(+). Protects against axonal degeneration following injury. May be involved in the maintenance of axonal integrity. Also functions as a stress-response chaperone protein that prevents toxic aggregation of proteins; this function may be independent of its NAD(+) synthesis activity. This is Nicotinamide/nicotinic acid mononucleotide adenylyltransferase 3 from Mus musculus (Mouse).